A 704-amino-acid polypeptide reads, in one-letter code: Glycogen [starch] synthase, liver (704 aa).

The residue at position 8 (Ser-8) is a Phosphoserine; by AMPK and PKA. Phosphoserine is present on Ser-11. Lys-40 lines the UDP pocket. The UDP-alpha-D-glucose site is built by His-205 and Arg-211. His-291, Glu-292, Gln-294, His-297, and Lys-301 together coordinate alpha-D-glucose 6-phosphate. Arg-331 is a UDP binding site. UDP-alpha-D-glucose is bound at residue Arg-331. His-501 contacts alpha-D-glucose 6-phosphate. Glu-510, Trp-512, and Gly-513 together coordinate UDP-alpha-D-glucose. Thr-515 provides a ligand contact to UDP. The alpha-D-glucose 6-phosphate site is built by Arg-582 and Arg-586. The interval 620–704 (KFHLEPTSPP…KKKLHGEYKN (85 aa)) is disordered. Ser-627 carries the post-translational modification Phosphoserine. Ser-641, Ser-645, Ser-649, and Ser-653 each carry phosphoserine; by GSK3-alpha and GSK3-beta. Residues 647 to 657 (SGSQASSPQCS) show a composition bias toward low complexity. Ser-657 bears the Phosphoserine; by CK2 mark. The span at 658 to 675 (DAEDEEDEDERYDEEEEA) shows a compositional bias: acidic residues. Ser-684 carries the post-translational modification Phosphoserine.

It belongs to the glycosyltransferase 3 family. As to quaternary structure, part of the glycogen synthase (GS)-glycogenin complex, a heterooctamer composed of a tetramer of GS and 2 dimers of glycogenin, where each GS protomer binds to one glycogenin subunit (via glycogenin C-terminus); the GS tetramer may dissociate from glycogenin dimers to continue glycogen polymerization on its own. May also form a heterooctamer complex with GYG1 (via GYG1 C-terminus). Post-translationally, phosphorylation reduces the activity towards UDP-alpha-D-glucose. Primed phosphorylation at Ser-657 (site 5) by CSNK2A1 and CSNK2A2 is required for inhibitory phosphorylation at Ser-641 (site 3a), Ser-645 (site 3b), Ser-649 (site 3c) and Ser-653 (site 4) by GSK3A an GSK3B. Dephosphorylation at Ser-641 and Ser-645 by PP1 activates the enzyme. Phosphorylation at Ser-8 is not required for interaction with GYG1. Interaction with GYG1 does not regulate the phosphorylation at Ser-8 and Ser-641. As to expression, specifically expressed in liver.

It carries out the reaction [(1-&gt;4)-alpha-D-glucosyl](n) + UDP-alpha-D-glucose = [(1-&gt;4)-alpha-D-glucosyl](n+1) + UDP + H(+). The protein operates within glycan biosynthesis; glycogen biosynthesis. Its activity is regulated as follows. Allosteric activation by glucose-6-phosphate. Phosphorylation reduces the activity towards UDP-glucose. When in the non-phosphorylated state, glycogen synthase does not require glucose-6-phosphate as an allosteric activator; when phosphorylated it does. In terms of biological role, glycogen synthase participates in the glycogen biosynthetic process along with glycogenin and glycogen branching enzyme. Extends the primer composed of a few glucose units formed by glycogenin by adding new glucose units to it. In this context, glycogen synthase transfers the glycosyl residue from UDP-Glc to the non-reducing end of alpha-1,4-glucan. This Mus musculus (Mouse) protein is Glycogen [starch] synthase, liver.